The chain runs to 147 residues: Large ribosomal subunit protein uL15 (147 aa).

A disordered region spans residues 21-49; it reads RVGRGEGSKGKTAGRGTKGTKARAPVRPG.

The protein belongs to the universal ribosomal protein uL15 family. As to quaternary structure, part of the 50S ribosomal subunit.

In terms of biological role, binds to the 23S rRNA. This is Large ribosomal subunit protein uL15 from Tropheryma whipplei (strain TW08/27) (Whipple's bacillus).